Here is a 483-residue protein sequence, read N- to C-terminus: MTGLGKRRPARSRSGVSGLRERRQPASVERSAGSEGRRELVIQGLAHDGRGVARDVDGKTVFVEGALPGERVQASVHRRRKRFDEAHVSEVIAASASRVAPPCRHYGSCGGCDLQHLSLEAQRDHKREVLRELLARQGIELPGASSLLADAGEGYRRRARIGVRVDSNGQVRLGFRARHSHRLVDLDDCPVLLPALSSLLRPLREQVESLEAPRHVGHLELLASDGAVTLVVRQLREHVADQRRWRAFAEAQGLHLGAWLGRESPRFEWLTPPPALHCRLTAGRRTLVLGLEPSDFLQANEAVNQRMVDTALSWLAPALSPVAPGTRVLDLFAGIGNFSLPLATQGAEVSAVEGSTAMVERLAGNAARNQVAVTARQADLNDAEACRRLLATTAPEVLVLDPPRSGAEALCRQLVEHPVPWVLYISCDPATLARDAAWLVSAGYVVRRSAVADMFAHTSHLESMLLLEHPDSARRQQGASTDG.

Positions 1–11 (MTGLGKRRPAR) are enriched in basic residues. The tract at residues 1 to 36 (MTGLGKRRPARSRSGVSGLRERRQPASVERSAGSEG) is disordered. One can recognise a TRAM domain in the interval 29 to 90 (ERSAGSEGRR…KRFDEAHVSE (62 aa)). The [4Fe-4S] cluster site is built by C103, C109, C112, and C189. 6 residues coordinate S-adenosyl-L-methionine: Q298, F332, N337, E353, D379, and D401. C427 functions as the Nucleophile in the catalytic mechanism.

It belongs to the class I-like SAM-binding methyltransferase superfamily. RNA M5U methyltransferase family. RlmD subfamily.

It carries out the reaction uridine(1939) in 23S rRNA + S-adenosyl-L-methionine = 5-methyluridine(1939) in 23S rRNA + S-adenosyl-L-homocysteine + H(+). Catalyzes the formation of 5-methyl-uridine at position 1939 (m5U1939) in 23S rRNA. The chain is 23S rRNA (uracil(1939)-C(5))-methyltransferase RlmD from Halomonas elongata (strain ATCC 33173 / DSM 2581 / NBRC 15536 / NCIMB 2198 / 1H9).